A 545-amino-acid polypeptide reads, in one-letter code: Hydroxylamine reductase (545 aa).

[4Fe-4S] cluster is bound by residues Cys7, Cys10, Cys19, and Cys25. Hybrid [4Fe-2O-2S] cluster-binding residues include His241, Glu265, Cys309, Cys400, Cys428, Cys453, Glu488, and Lys490. Cys400 is subject to Cysteine persulfide; in oxidized form.

The protein belongs to the HCP family. As to quaternary structure, monomer. [4Fe-4S] cluster is required as a cofactor. It depends on hybrid [4Fe-2O-2S] cluster as a cofactor.

Its subcellular location is the cytoplasm. It carries out the reaction A + NH4(+) + H2O = hydroxylamine + AH2 + H(+). Functionally, catalyzes the reduction of hydroxylamine to form NH(3) and H(2)O. The chain is Hydroxylamine reductase from Desulfovibrio desulfuricans (strain ATCC 27774 / DSM 6949 / MB).